Consider the following 257-residue polypeptide: NAD-capped RNA hydrolase NudC (257 aa).

Substrate contacts are provided by Lys25 and Arg69. The Zn(2+) site is built by Cys98 and Cys101. Glu111 provides a ligand contact to substrate. Cys116 and Cys119 together coordinate Zn(2+). Tyr124 is a substrate binding site. A Nudix hydrolase domain is found at Pro125–Thr248. Positions 158, 174, and 178 each coordinate a divalent metal cation. A Nudix box motif is present at residues Gly159–Gly180. Gln192–Ser199 is a binding site for substrate. Residue Glu219 coordinates a divalent metal cation. A substrate-binding site is contributed by Ala241.

The protein belongs to the Nudix hydrolase family. NudC subfamily. In terms of assembly, homodimer. It depends on Mg(2+) as a cofactor. Mn(2+) serves as cofactor. Requires Zn(2+) as cofactor.

The catalysed reaction is a 5'-end NAD(+)-phospho-ribonucleoside in mRNA + H2O = a 5'-end phospho-adenosine-phospho-ribonucleoside in mRNA + beta-nicotinamide D-ribonucleotide + 2 H(+). It catalyses the reaction NAD(+) + H2O = beta-nicotinamide D-ribonucleotide + AMP + 2 H(+). It carries out the reaction NADH + H2O = reduced beta-nicotinamide D-ribonucleotide + AMP + 2 H(+). Functionally, mRNA decapping enzyme that specifically removes the nicotinamide adenine dinucleotide (NAD) cap from a subset of mRNAs by hydrolyzing the diphosphate linkage to produce nicotinamide mononucleotide (NMN) and 5' monophosphate mRNA. The NAD-cap is present at the 5'-end of some mRNAs and stabilizes RNA against 5'-processing. Has preference for mRNAs with a 5'-end purine. Catalyzes the hydrolysis of a broad range of dinucleotide pyrophosphates. This Escherichia coli O127:H6 (strain E2348/69 / EPEC) protein is NAD-capped RNA hydrolase NudC.